The chain runs to 569 residues: Potassium-transporting ATPase potassium-binding subunit (569 aa).

A run of 10 helical transmembrane segments spans residues L3–L23, A68–L88, V136–V156, V179–V199, L259–V279, H284–Y304, G384–G404, A422–V442, I490–G510, and L534–L554.

It belongs to the KdpA family. The system is composed of three essential subunits: KdpA, KdpB and KdpC.

The protein resides in the cell inner membrane. In terms of biological role, part of the high-affinity ATP-driven potassium transport (or Kdp) system, which catalyzes the hydrolysis of ATP coupled with the electrogenic transport of potassium into the cytoplasm. This subunit binds the periplasmic potassium ions and delivers the ions to the membrane domain of KdpB through an intramembrane tunnel. This is Potassium-transporting ATPase potassium-binding subunit from Nitratidesulfovibrio vulgaris (strain ATCC 29579 / DSM 644 / CCUG 34227 / NCIMB 8303 / VKM B-1760 / Hildenborough) (Desulfovibrio vulgaris).